The primary structure comprises 227 residues: Germin-like protein 3-5 (227 aa).

Residues methionine 1–alanine 29 form the signal peptide. Cysteine 36 and cysteine 51 are joined by a disulfide. The 153-residue stretch at serine 65–glutamate 217 folds into the Cupin type-1 domain. Asparagine 78 and asparagine 81 each carry an N-linked (GlcNAc...) asparagine glycan. 4 residues coordinate Mn(2+): histidine 114, histidine 116, glutamate 121, and histidine 163.

This sequence belongs to the germin family. In terms of assembly, oligomer (believed to be a pentamer but probably hexamer).

Its subcellular location is the secreted. It localises to the extracellular space. The protein localises to the apoplast. May play a role in plant defense. Probably has no oxalate oxidase activity even if the active site is conserved. The protein is Germin-like protein 3-5 of Oryza sativa subsp. japonica (Rice).